Here is a 653-residue protein sequence, read N- to C-terminus: Exocyst complex component 7 (653 aa).

Residues 1-384 (MIPPQEASAR…TKNKLPGLIT (384 aa)) form an SEC8 and ARHQ binding region. Coiled-coil stretches lie at residues 5–42 (QEAS…TKNM) and 63–85 (VHKQ…SCLD). Phosphoserine is present on serine 133. The tract at residues 238-272 (FRKSSSSSGVPYSPAIPNKRKDTPTKKPIKRPGRD) is disordered.

Belongs to the EXO70 family. As to quaternary structure, the exocyst complex is composed of EXOC1, EXOC2, EXOC3, EXOC4, EXOC5, EXOC6, EXOC7 and EXOC8. Interacts with ARHQ in a GTP-dependent manner. Interacts with RAB11FIP3.

Its subcellular location is the cytoplasm. The protein localises to the cytosol. It localises to the cell membrane. It is found in the midbody. The protein resides in the midbody ring. Component of the exocyst complex involved in the docking of exocytic vesicles with fusion sites on the plasma membrane. In adipocytes, plays a crucial role in targeting SLC2A4 vesicle to the plasma membrane in response to insulin, perhaps directing the vesicle to the precise site of fusion. It is required for neuron survival and plays an essential role in cortical development. This is Exocyst complex component 7 (Exoc7) from Rattus norvegicus (Rat).